Here is a 218-residue protein sequence, read N- to C-terminus: Cytochrome b6 (218 aa).

The chain crosses the membrane as a helical span at residues 35 to 55; that stretch reads IFYCLGGITLVCFLIQFATGF. Heme c is bound at residue Cys38. Positions 89 and 103 each coordinate heme b. 3 helical membrane-spanning segments follow: residues 93 to 113, 119 to 139, and 189 to 209; these read ASMM…TGGF, LTWV…VTGY, and LHTF…FLMI. The heme b site is built by His190 and His205.

Belongs to the cytochrome b family. PetB subfamily. In terms of assembly, the 4 large subunits of the cytochrome b6-f complex are cytochrome b6, subunit IV (17 kDa polypeptide, PetD), cytochrome f and the Rieske protein, while the 4 small subunits are PetG, PetL, PetM and PetN. The complex functions as a dimer. Heme b serves as cofactor. It depends on heme c as a cofactor.

It localises to the cellular thylakoid membrane. In terms of biological role, component of the cytochrome b6-f complex, which mediates electron transfer between photosystem II (PSII) and photosystem I (PSI), cyclic electron flow around PSI, and state transitions. The chain is Cytochrome b6 from Synechococcus sp. (strain CC9311).